The sequence spans 1083 residues: Ubiquitin-protein ligase E3C (1083 aa).

Basic and acidic residues-rich tracts occupy residues 1 to 10 (MFSFEGDFKT) and 20 to 40 (SRKE…RKRE). Residues 1 to 40 (MFSFEGDFKTRPKVSLGGASRKEEKASLLHRTQEERRKRE) form a disordered region. Residues 1–60 (MFSFEGDFKTRPKVSLGGASRKEEKASLLHRTQEERRKREEERRRLKNAVIIQSFIRGYR) form a cis-determinant of acceptor ubiquitin-binding region. Residues 45 to 74 (RLKNAVIIQSFIRGYRDRKQQYFIQRSAFD) form the IQ domain. The tract at residues 354–386 (ASPTGTGCPDSTSDSEDDNEETDQPNSPEDGRV) is disordered. A compositionally biased stretch (acidic residues) spans 366–376 (SDSEDDNEETD). In terms of domain architecture, HECT spans 744–1083 (NEPDLKKRIR…IECAAGFELS (340 aa)). A Glycyl lysine isopeptide (Lys-Gly) (interchain with G-Cter in ubiquitin); by autocatalysis cross-link involves residue K903. C1051 acts as the Glycyl thioester intermediate in catalysis.

Belongs to the UBE3C family. In terms of assembly, interacts with 26S proteasomes. Interacts (via the HECT domain) with UBE2D1 and, less efficiently, with UBE2L3. In terms of processing, autoubiquitinated; promoting its own degradation.

It carries out the reaction S-ubiquitinyl-[E2 ubiquitin-conjugating enzyme]-L-cysteine + [acceptor protein]-L-lysine = [E2 ubiquitin-conjugating enzyme]-L-cysteine + N(6)-ubiquitinyl-[acceptor protein]-L-lysine.. It participates in protein modification; protein ubiquitination. E3 ubiquitin-protein ligase that specifically catalyzes 'Lys-29'- and 'Lys-48'-linked polyubiquitin chains. Accepts ubiquitin from the E2 ubiquitin-conjugating enzyme UBE2D1 in the form of a thioester and then directly transfers the ubiquitin to targeted substrates. Associates with the proteasome and promotes elongation of ubiquitin chains on substrates bound to the 26S proteasome. Also catalyzes 'Lys-29'- and 'Lys-48'-linked ubiquitination of 26S proteasome subunit ADRM1/RPN13 in response to proteotoxic stress, impairing the ability of the proteasome to bind and degrade ubiquitin-conjugated proteins. Acts as a negative regulator of autophagy by mediating 'Lys-29'- and 'Lys-48'-linked ubiquitination of PIK3C3/VPS34, promoting its degradation. Can assemble unanchored poly-ubiquitin chains in either 'Lys-29'- or 'Lys-48'-linked polyubiquitin chains; with some preference for 'Lys-48' linkages. Acts as a negative regulator of type I interferon by mediating 'Lys-48'-linked ubiquitination of IRF3 and IRF7, leading to their degradation by the proteasome. Catalyzes ubiquitination and degradation of CAND2. This chain is Ubiquitin-protein ligase E3C, found in Mus musculus (Mouse).